Here is a 172-residue protein sequence, read N- to C-terminus: Large ribosomal subunit protein uL10 (172 aa).

It belongs to the universal ribosomal protein uL10 family. In terms of assembly, part of the ribosomal stalk of the 50S ribosomal subunit. The N-terminus interacts with L11 and the large rRNA to form the base of the stalk. The C-terminus forms an elongated spine to which L12 dimers bind in a sequential fashion forming a multimeric L10(L12)X complex.

Its function is as follows. Forms part of the ribosomal stalk, playing a central role in the interaction of the ribosome with GTP-bound translation factors. The sequence is that of Large ribosomal subunit protein uL10 from Macrococcus caseolyticus (strain JCSC5402) (Macrococcoides caseolyticum).